A 439-amino-acid polypeptide reads, in one-letter code: Thymidine phosphorylase (439 aa).

It belongs to the thymidine/pyrimidine-nucleoside phosphorylase family. Homodimer.

It carries out the reaction thymidine + phosphate = 2-deoxy-alpha-D-ribose 1-phosphate + thymine. It participates in pyrimidine metabolism; dTMP biosynthesis via salvage pathway; dTMP from thymine: step 1/2. The enzymes which catalyze the reversible phosphorolysis of pyrimidine nucleosides are involved in the degradation of these compounds and in their utilization as carbon and energy sources, or in the rescue of pyrimidine bases for nucleotide synthesis. The polypeptide is Thymidine phosphorylase (Mesorhizobium japonicum (strain LMG 29417 / CECT 9101 / MAFF 303099) (Mesorhizobium loti (strain MAFF 303099))).